A 119-amino-acid chain; its full sequence is Ribonuclease P protein component (119 aa).

It belongs to the RnpA family. In terms of assembly, consists of a catalytic RNA component (M1 or rnpB) and a protein subunit.

It catalyses the reaction Endonucleolytic cleavage of RNA, removing 5'-extranucleotides from tRNA precursor.. RNaseP catalyzes the removal of the 5'-leader sequence from pre-tRNA to produce the mature 5'-terminus. It can also cleave other RNA substrates such as 4.5S RNA. The protein component plays an auxiliary but essential role in vivo by binding to the 5'-leader sequence and broadening the substrate specificity of the ribozyme. This is Ribonuclease P protein component from Streptococcus equi subsp. equi (strain 4047).